Here is a 313-residue protein sequence, read N- to C-terminus: 4-hydroxy-3-methylbut-2-enyl diphosphate reductase (313 aa).

Cys-12 contributes to the [4Fe-4S] cluster binding site. Positions 41 and 74 each coordinate (2E)-4-hydroxy-3-methylbut-2-enyl diphosphate. The dimethylallyl diphosphate site is built by His-41 and His-74. Isopentenyl diphosphate is bound by residues His-41 and His-74. Cys-96 serves as a coordination point for [4Fe-4S] cluster. His-124 contacts (2E)-4-hydroxy-3-methylbut-2-enyl diphosphate. His-124 lines the dimethylallyl diphosphate pocket. Position 124 (His-124) interacts with isopentenyl diphosphate. Glu-126 functions as the Proton donor in the catalytic mechanism. A (2E)-4-hydroxy-3-methylbut-2-enyl diphosphate-binding site is contributed by Thr-164. Cys-194 provides a ligand contact to [4Fe-4S] cluster. Residues Ser-222, Ser-223, Asn-224, and Ser-266 each contribute to the (2E)-4-hydroxy-3-methylbut-2-enyl diphosphate site. Ser-222, Ser-223, Asn-224, and Ser-266 together coordinate dimethylallyl diphosphate. Ser-222, Ser-223, Asn-224, and Ser-266 together coordinate isopentenyl diphosphate.

Belongs to the IspH family. It depends on [4Fe-4S] cluster as a cofactor.

It catalyses the reaction isopentenyl diphosphate + 2 oxidized [2Fe-2S]-[ferredoxin] + H2O = (2E)-4-hydroxy-3-methylbut-2-enyl diphosphate + 2 reduced [2Fe-2S]-[ferredoxin] + 2 H(+). It carries out the reaction dimethylallyl diphosphate + 2 oxidized [2Fe-2S]-[ferredoxin] + H2O = (2E)-4-hydroxy-3-methylbut-2-enyl diphosphate + 2 reduced [2Fe-2S]-[ferredoxin] + 2 H(+). The protein operates within isoprenoid biosynthesis; dimethylallyl diphosphate biosynthesis; dimethylallyl diphosphate from (2E)-4-hydroxy-3-methylbutenyl diphosphate: step 1/1. Its pathway is isoprenoid biosynthesis; isopentenyl diphosphate biosynthesis via DXP pathway; isopentenyl diphosphate from 1-deoxy-D-xylulose 5-phosphate: step 6/6. Catalyzes the conversion of 1-hydroxy-2-methyl-2-(E)-butenyl 4-diphosphate (HMBPP) into a mixture of isopentenyl diphosphate (IPP) and dimethylallyl diphosphate (DMAPP). Acts in the terminal step of the DOXP/MEP pathway for isoprenoid precursor biosynthesis. The sequence is that of 4-hydroxy-3-methylbut-2-enyl diphosphate reductase from Burkholderia pseudomallei (strain 1026b).